A 361-amino-acid polypeptide reads, in one-letter code: MLYWLIDFASTIPAFNVFRYITFRTGGAMVTGALFVFLCGPWIIDNLRLRQGKGQPIRSDGPQSHLSKKGTPTMGGLMVLSGLVVGTVLWANPLNPYVWIVLAVTLGFGFVGFYDDYLKVTKQSSQNGFAGRWRLLIEAVIAAAACYALVRLGRDPLSSSLVIPFFKDVAINLGWFFVGFGAFIVVGAGNAVNLTDGLDGLAIVPVMIAAASFGLISYLAGNAVFADYLQINYVAGTGELSVLCGALLGAGLGFLWFNAPPASIFMGDTGSLALGGMLGSIAVAVKHEIVLAVIGGLFVLEAVSVIVQVASFKLTGKRVFKMAPIHHHFEQKGWTEPQIVIRFWIIAVMLALAGLSTLKLR.

10 helical membrane passes run Thr-25–Asp-45, Thr-71–Ala-91, Leu-94–Tyr-114, Trp-133–Gly-153, Val-169–Gly-189, Gly-200–Ala-220, Leu-240–Pro-260, Ile-264–Ala-284, Ile-289–Val-309, and Gln-338–Leu-358.

It belongs to the glycosyltransferase 4 family. MraY subfamily. It depends on Mg(2+) as a cofactor.

It localises to the cell inner membrane. The catalysed reaction is UDP-N-acetyl-alpha-D-muramoyl-L-alanyl-gamma-D-glutamyl-meso-2,6-diaminopimeloyl-D-alanyl-D-alanine + di-trans,octa-cis-undecaprenyl phosphate = di-trans,octa-cis-undecaprenyl diphospho-N-acetyl-alpha-D-muramoyl-L-alanyl-D-glutamyl-meso-2,6-diaminopimeloyl-D-alanyl-D-alanine + UMP. It functions in the pathway cell wall biogenesis; peptidoglycan biosynthesis. In terms of biological role, catalyzes the initial step of the lipid cycle reactions in the biosynthesis of the cell wall peptidoglycan: transfers peptidoglycan precursor phospho-MurNAc-pentapeptide from UDP-MurNAc-pentapeptide onto the lipid carrier undecaprenyl phosphate, yielding undecaprenyl-pyrophosphoryl-MurNAc-pentapeptide, known as lipid I. The polypeptide is Phospho-N-acetylmuramoyl-pentapeptide-transferase (Rhodopseudomonas palustris (strain BisB18)).